The chain runs to 130 residues: DNA-binding protein HU (130 aa).

Belongs to the bacterial histone-like protein family.

Its function is as follows. Histone-like DNA-binding protein which is capable of wrapping DNA to stabilize it, and thus to prevent its denaturation under extreme environmental conditions. The protein is DNA-binding protein HU (hup) of Ureaplasma parvum serovar 3 (strain ATCC 700970).